Here is an 866-residue protein sequence, read N- to C-terminus: Probable outer membrane usher protein ElfC (866 aa).

Positions 1–35 (MYRTHRQHSLLSSGGVPSFIGGLVVFVSAAFNAQA) are cleaved as a signal peptide.

It belongs to the fimbrial export usher family.

Its subcellular location is the cell outer membrane. Part of the elfADCG-ycbUVF fimbrial operon, which promotes adhesion of bacteria to different abiotic surfaces. Could be involved in the export and assembly of the ElfA fimbrial subunits across the outer membrane. In Escherichia coli (strain K12), this protein is Probable outer membrane usher protein ElfC (elfC).